The chain runs to 483 residues: Protein adenylyltransferase Fic (483 aa).

Residues 20–42 (AFFFIAGSLATFVFHALTSSSSV) form a helical membrane-spanning segment. TPR repeat units follow at residues 107–140 (ALGA…APKH) and 141–175 (PEVL…SPSN). The Inhibitory (S/T)XXXE(G/N) motif motif lies at 232–237 (SVGIEG). ATP is bound by residues glutamate 236 and 317 to 320 (VGGH). One can recognise a Fido domain in the interval 286-421 (ITLKDILELH…IRPFVRFIAD (136 aa)). Histidine 364 is an active-site residue. ATP is bound by residues 368 to 375 (DGNGRTSR), 400 to 401 (YY), and asparagine 408. Residues 464-483 (SAPEPYESGSGLDSGVNGMP) are disordered.

This sequence belongs to the fic family. In terms of assembly, homodimer.

It localises to the membrane. It carries out the reaction L-tyrosyl-[protein] + ATP = O-(5'-adenylyl)-L-tyrosyl-[protein] + diphosphate. The catalysed reaction is L-threonyl-[protein] + ATP = 3-O-(5'-adenylyl)-L-threonyl-[protein] + diphosphate. It catalyses the reaction 3-O-(5'-adenylyl)-L-threonyl-[protein] + H2O = L-threonyl-[protein] + AMP + H(+). The side chain of Glu-236 determines which of the two opposing activities (AMPylase or de-AMPylase) will take place. In response to endoplasmic reticulum stress, mediates de-AMPylase activity. Adenylyltransferase activity is inhibited by the inhibitory helix present at the N-terminus: Glu-236 binds ATP and competes with ATP-binding at Arg-375, thereby preventing adenylyltransferase activity. In unstressed cells, disengagement of Glu-236 promotes adenylyltransferase activity. Activation dissociates ATP-binding from Glu-236, allowing ordered binding of the entire ATP moiety with the alpha-phosphate in an orientation that is productive for accepting an incoming target hydroxyl side chain. Its function is as follows. Protein that can both mediate the addition of adenosine 5'-monophosphate (AMP) to specific residues of target proteins (AMPylation), and the removal of the same modification from target proteins (de-AMPylation), depending on the context. The side chain of Glu-236 determines which of the two opposing activities (AMPylase or de-AMPylase) will take place. Acts as a key regulator of the unfolded protein response (UPR) by mediating AMPylation or de-AMPylation of Hsc70-3/BiP. In unstressed cells, acts as an adenylyltransferase by mediating AMPylation of Hsc70-3/BiP at 'Thr-518', thereby inactivating it. In response to endoplasmic reticulum stress, acts as a phosphodiesterase by mediating removal of ATP (de-AMPylation) from Hsc70-3/BiP at 'Thr-518', leading to restore HSPA5/BiP activity. This Drosophila grimshawi (Hawaiian fruit fly) protein is Protein adenylyltransferase Fic.